Consider the following 359-residue polypeptide: Peptide chain release factor 1 (359 aa).

Residue glutamine 233 is modified to N5-methylglutamine.

Belongs to the prokaryotic/mitochondrial release factor family. Post-translationally, methylated by PrmC. Methylation increases the termination efficiency of RF1.

Its subcellular location is the cytoplasm. Peptide chain release factor 1 directs the termination of translation in response to the peptide chain termination codons UAG and UAA. The protein is Peptide chain release factor 1 of Clostridium acetobutylicum (strain ATCC 824 / DSM 792 / JCM 1419 / IAM 19013 / LMG 5710 / NBRC 13948 / NRRL B-527 / VKM B-1787 / 2291 / W).